Reading from the N-terminus, the 653-residue chain is Threonine--tRNA ligase (653 aa).

The TGS domain occupies 1–61 (MIKITFPDGN…NEDAEVKLFK (61 aa)). A catalytic region spans residues 243 to 542 (DHRKIGKELE…LIEHTAGKFP (300 aa)). 3 residues coordinate Zn(2+): Cys338, His389, and His519.

It belongs to the class-II aminoacyl-tRNA synthetase family. Homodimer. Requires Zn(2+) as cofactor.

Its subcellular location is the cytoplasm. The catalysed reaction is tRNA(Thr) + L-threonine + ATP = L-threonyl-tRNA(Thr) + AMP + diphosphate + H(+). Its function is as follows. Catalyzes the attachment of threonine to tRNA(Thr) in a two-step reaction: L-threonine is first activated by ATP to form Thr-AMP and then transferred to the acceptor end of tRNA(Thr). Also edits incorrectly charged L-seryl-tRNA(Thr). The protein is Threonine--tRNA ligase of Porphyromonas gingivalis (strain ATCC 33277 / DSM 20709 / CIP 103683 / JCM 12257 / NCTC 11834 / 2561).